Consider the following 348-residue polypeptide: Protein RecA (348 aa).

66–73 contributes to the ATP binding site; the sequence is GPESSGKT.

Belongs to the RecA family.

It localises to the cytoplasm. Functionally, can catalyze the hydrolysis of ATP in the presence of single-stranded DNA, the ATP-dependent uptake of single-stranded DNA by duplex DNA, and the ATP-dependent hybridization of homologous single-stranded DNAs. It interacts with LexA causing its activation and leading to its autocatalytic cleavage. In Legionella pneumophila (strain Paris), this protein is Protein RecA.